We begin with the raw amino-acid sequence, 718 residues long: Polyribonucleotide nucleotidyltransferase (718 aa).

D497 and D503 together coordinate Mg(2+). One can recognise a KH domain in the interval 564–623 (PRLLTMKIDPEQIGLVIGPGGKTIKGITEQTGSKIDIADDGTVTIAALEAEKAEKAKQII). An S1 motif domain is found at 633-701 (GEVYMGRVTR…AKGRLNLTRL (69 aa)).

It belongs to the polyribonucleotide nucleotidyltransferase family. It depends on Mg(2+) as a cofactor.

It is found in the cytoplasm. It catalyses the reaction RNA(n+1) + phosphate = RNA(n) + a ribonucleoside 5'-diphosphate. Involved in mRNA degradation. Catalyzes the phosphorolysis of single-stranded polyribonucleotides processively in the 3'- to 5'-direction. This is Polyribonucleotide nucleotidyltransferase from Rippkaea orientalis (strain PCC 8801 / RF-1) (Cyanothece sp. (strain PCC 8801)).